The primary structure comprises 541 residues: T-complex protein 1 subunit epsilon (541 aa).

A2 is modified (N-acetylalanine). A Glycyl lysine isopeptide (Lys-Gly) (interchain with G-Cter in SUMO2) cross-link involves residue K20. S26 bears the Phosphoserine mark. G53 is an ADP binding site. G53 is a binding site for ATP. D104 lines the Mg(2+) pocket. Residues G105, T106, T107, and S175 each coordinate ADP. ATP is bound by residues T106 and T107. Glycyl lysine isopeptide (Lys-Gly) (interchain with G-Cter in SUMO2) cross-links involve residues K210, K214, K265, K275, and K279. Phosphoserine is present on S346. K392 participates in a covalent cross-link: Glycyl lysine isopeptide (Lys-Gly) (interchain with G-Cter in SUMO2). Positions 422, 492, 508, and 513 each coordinate ADP. G422 provides a ligand contact to ATP. S539 carries the post-translational modification Phosphoserine.

It belongs to the TCP-1 chaperonin family. As to quaternary structure, component of the chaperonin-containing T-complex (TRiC), a hexadecamer composed of two identical back-to-back stacked rings enclosing a protein folding chamber. Each ring is made up of eight different subunits: TCP1/CCT1, CCT2, CCT3, CCT4, CCT5, CCT6A/CCT6, CCT7, CCT8. Interacts with PACRG. Interacts with DNAAF4. Interacts with DLEC1. Interacts with SPMAP2. Ubiquitinated by the DCX(DCAF12) complex specifically recognizes the diglutamate (Glu-Glu) at the C-terminus, leading to its degradation.

It is found in the cytoplasm. The protein localises to the cytoskeleton. It localises to the microtubule organizing center. The protein resides in the centrosome. It catalyses the reaction ATP + H2O = ADP + phosphate + H(+). Its function is as follows. Component of the chaperonin-containing T-complex (TRiC), a molecular chaperone complex that assists the folding of actin, tubulin and other proteins upon ATP hydrolysis. The TRiC complex mediates the folding of WRAP53/TCAB1, thereby regulating telomere maintenance. As part of the TRiC complex may play a role in the assembly of BBSome, a complex involved in ciliogenesis regulating transports vesicles to the cilia. The protein is T-complex protein 1 subunit epsilon (Cct5) of Rattus norvegicus (Rat).